Here is a 483-residue protein sequence, read N- to C-terminus: Altronate oxidoreductase (483 aa).

18–29 contacts NAD(+); the sequence is IIQFGEGNFLRA.

This sequence belongs to the mannitol dehydrogenase family. UxaB subfamily.

The catalysed reaction is D-altronate + NAD(+) = keto-D-tagaturonate + NADH + H(+). It functions in the pathway carbohydrate metabolism; pentose and glucuronate interconversion. The sequence is that of Altronate oxidoreductase from Escherichia coli O17:K52:H18 (strain UMN026 / ExPEC).